The following is a 205-amino-acid chain: N-(5'-phosphoribosyl)anthranilate isomerase (205 aa).

The protein belongs to the TrpF family.

It catalyses the reaction N-(5-phospho-beta-D-ribosyl)anthranilate = 1-(2-carboxyphenylamino)-1-deoxy-D-ribulose 5-phosphate. It functions in the pathway amino-acid biosynthesis; L-tryptophan biosynthesis; L-tryptophan from chorismate: step 3/5. This chain is N-(5'-phosphoribosyl)anthranilate isomerase, found in Trichlorobacter lovleyi (strain ATCC BAA-1151 / DSM 17278 / SZ) (Geobacter lovleyi).